A 93-amino-acid chain; its full sequence is Large ribosomal subunit protein uL23cz/uL23cy (93 aa).

This sequence belongs to the universal ribosomal protein uL23 family. Part of the 50S ribosomal subunit.

Its subcellular location is the plastid. It localises to the chloroplast. Its function is as follows. Binds to 23S rRNA. The protein is Large ribosomal subunit protein uL23cz/uL23cy (rpl23-A) of Oryza nivara (Indian wild rice).